A 446-amino-acid polypeptide reads, in one-letter code: Tubulin alpha-2 chain (446 aa).

Positions 1–4 (MREC) match the MREC motif motif. GTP-binding residues include glutamine 11, glutamate 68, serine 137, glycine 141, threonine 142, serine 176, asparagine 203, and asparagine 225. Mg(2+) is bound at residue glutamate 68. Residue glutamate 251 is part of the active site.

This sequence belongs to the tubulin family. As to quaternary structure, dimer of alpha and beta chains. A typical microtubule is a hollow water-filled tube with an outer diameter of 25 nm and an inner diameter of 15 nM. Alpha-beta heterodimers associate head-to-tail to form protofilaments running lengthwise along the microtubule wall with the beta-tubulin subunit facing the microtubule plus end conferring a structural polarity. Microtubules usually have 13 protofilaments but different protofilament numbers can be found in some organisms and specialized cells. Mg(2+) is required as a cofactor. Post-translationally, some glutamate residues at the C-terminus are polyglycylated, resulting in polyglycine chains on the gamma-carboxyl group. Glycylation is mainly limited to tubulin incorporated into axonemes (cilia and flagella) whereas glutamylation is prevalent in neuronal cells, centrioles, axonemes, and the mitotic spindle. Both modifications can coexist on the same protein on adjacent residues, and lowering polyglycylation levels increases polyglutamylation, and reciprocally. The precise function of polyglycylation is still unclear. Some glutamate residues at the C-terminus are polyglutamylated, resulting in polyglutamate chains on the gamma-carboxyl group. Polyglutamylation plays a key role in microtubule severing by spastin (SPAST). SPAST preferentially recognizes and acts on microtubules decorated with short polyglutamate tails: severing activity by SPAST increases as the number of glutamates per tubulin rises from one to eight, but decreases beyond this glutamylation threshold. In terms of tissue distribution, testis specific.

It is found in the cytoplasm. It localises to the cytoskeleton. It carries out the reaction GTP + H2O = GDP + phosphate + H(+). Tubulin is the major constituent of microtubules, a cylinder consisting of laterally associated linear protofilaments composed of alpha- and beta-tubulin heterodimers. Microtubules grow by the addition of GTP-tubulin dimers to the microtubule end, where a stabilizing cap forms. Below the cap, tubulin dimers are in GDP-bound state, owing to GTPase activity of alpha-tubulin. The sequence is that of Tubulin alpha-2 chain from Gallus gallus (Chicken).